Here is a 635-residue protein sequence, read N- to C-terminus: Early transcription factor 70 kDa subunit (635 aa).

Residues 32-185 (RSIIDENKSV…SNIISLMSDE (154 aa)) form the Helicase ATP-binding domain. 45–52 (HIMGSGKT) serves as a coordination point for ATP. Positions 135-138 (DEAH) match the DEXH box motif. In terms of domain architecture, Helicase C-terminal spans 326-505 (KFKYFINKIE…TLPFDIKKLL (180 aa)).

Belongs to the helicase family. VETF subfamily. As to quaternary structure, heterodimer of a 70 kDa and a 82 kDa subunit. Part of the early transcription complex composed of ETF, RAP94, and the DNA-directed RNA polymerase.

Its subcellular location is the virion. Functionally, acts with RNA polymerase to initiate transcription from early gene promoters. Is recruited by the RPO-associated protein of 94 kDa (RAP94) to form the early transcription complex, which also contains the core RNA polymerase. ETF heterodimer binds to early gene promoters. The chain is Early transcription factor 70 kDa subunit (VETFS) from Oryctolagus cuniculus (Rabbit).